We begin with the raw amino-acid sequence, 268 residues long: MKRVALVIQYDGSYFSGWQRQKNAISVQETIENCLFKISNQIIKTFASGRTDAGVHASGQVIHFDIDFLIPIDRYADVLNSRLPHTIRILESVEVKSSWHACYSAVYRHYRYVINNNKIPNLFLNKWSWHRYQKYLDEVSMSIALDGMIGEHDFFAFQKSGSNRSTSVTTIKDIKLERTEDLILIDIKATGFLYGMVRSIVGQLVLVGEKKITPDIFKDRWVLKKKHDVRESAPAKGLCFVNSVYEENIFKRINKNDLFPKFVIRGYS.

The Nucleophile role is filled by Asp52. A substrate-binding site is contributed by Tyr110.

It belongs to the tRNA pseudouridine synthase TruA family. Homodimer.

It carries out the reaction uridine(38/39/40) in tRNA = pseudouridine(38/39/40) in tRNA. In terms of biological role, formation of pseudouridine at positions 38, 39 and 40 in the anticodon stem and loop of transfer RNAs. The chain is tRNA pseudouridine synthase A from Prochlorococcus marinus subsp. pastoris (strain CCMP1986 / NIES-2087 / MED4).